The following is a 183-amino-acid chain: A-type ATP synthase subunit E (183 aa).

It belongs to the V-ATPase E subunit family. In terms of assembly, has multiple subunits with at least A(3), B(3), C, D, E, F, H, I and proteolipid K(x).

It localises to the cell membrane. Component of the A-type ATP synthase that produces ATP from ADP in the presence of a proton gradient across the membrane. This chain is A-type ATP synthase subunit E, found in Methanosarcina acetivorans (strain ATCC 35395 / DSM 2834 / JCM 12185 / C2A).